The following is a 321-amino-acid chain: Glycerol-3-phosphate phosphatase (321 aa).

The active-site Nucleophile is aspartate 34. Aspartate 34, aspartate 36, and aspartate 260 together coordinate Mg(2+). The active-site Proton donor is the aspartate 36.

This sequence belongs to the HAD-like hydrolase superfamily. CbbY/CbbZ/Gph/YieH family. In terms of assembly, homodimer. Mg(2+) is required as a cofactor. In terms of tissue distribution, ubiquitously expressed with higher expression in testis, heart, skeletal muscle and islet tissue (at protein level).

The enzyme catalyses O-phospho-L-tyrosyl-[protein] + H2O = L-tyrosyl-[protein] + phosphate. It carries out the reaction sn-glycerol 1-phosphate + H2O = glycerol + phosphate. The catalysed reaction is sn-glycerol 3-phosphate + H2O = glycerol + phosphate. With respect to regulation, inhibited by orthovanadate, beryllium trifluoride, Ca(2+) and EDTA. Functionally, glycerol-3-phosphate phosphatase hydrolyzing glycerol-3-phosphate into glycerol. Thereby, regulates the cellular levels of glycerol-3-phosphate a metabolic intermediate of glucose, lipid and energy metabolism. Was also shown to have a 2-phosphoglycolate phosphatase activity and a tyrosine-protein phosphatase activity. However, their physiological relevance is unclear. In vitro, also has a phosphatase activity toward ADP, ATP, GDP and GTP. This Mus musculus (Mouse) protein is Glycerol-3-phosphate phosphatase.